Reading from the N-terminus, the 317-residue chain is Sulfate adenylyltransferase subunit 2 (317 aa).

Residues 1-10 (MSNAVHETDS) are compositionally biased toward basic and acidic residues. Disordered regions lie at residues 1 to 21 (MSNA…PPLD) and 298 to 317 (RAID…EGYF).

The protein belongs to the PAPS reductase family. CysD subfamily. As to quaternary structure, heterodimer composed of CysD, the smaller subunit, and CysN.

It carries out the reaction sulfate + ATP + H(+) = adenosine 5'-phosphosulfate + diphosphate. It participates in sulfur metabolism; hydrogen sulfide biosynthesis; sulfite from sulfate: step 1/3. In terms of biological role, with CysN forms the ATP sulfurylase (ATPS) that catalyzes the adenylation of sulfate producing adenosine 5'-phosphosulfate (APS) and diphosphate, the first enzymatic step in sulfur assimilation pathway. APS synthesis involves the formation of a high-energy phosphoric-sulfuric acid anhydride bond driven by GTP hydrolysis by CysN coupled to ATP hydrolysis by CysD. The chain is Sulfate adenylyltransferase subunit 2 from Agrobacterium fabrum (strain C58 / ATCC 33970) (Agrobacterium tumefaciens (strain C58)).